A 152-amino-acid chain; its full sequence is Ribosome maturation factor RimP (152 aa).

It belongs to the RimP family.

Its subcellular location is the cytoplasm. Functionally, required for maturation of 30S ribosomal subunits. This chain is Ribosome maturation factor RimP, found in Ectopseudomonas mendocina (strain ymp) (Pseudomonas mendocina).